A 106-amino-acid polypeptide reads, in one-letter code: MQQVFRREGINLYYYSNKTKKFSLDSWYLPQLHLLESKGNKKSKAATDQYFIHPSRTRQERDLTDRKHRPEQQQLQRRVTRWKKEVTTRSRPKETSSTHLPYHGSY.

The tract at residues 38 to 106 (KGNKKSKAAT…STHLPYHGSY (69 aa)) is disordered. 2 stretches are compositionally biased toward basic and acidic residues: residues 57–71 (TRQE…HRPE) and 82–96 (WKKE…KETS).

Its subcellular location is the mitochondrion. This is an uncharacterized protein from Arabidopsis thaliana (Mouse-ear cress).